The following is a 299-amino-acid chain: Delta-9 desaturase-like 3 protein (299 aa).

Transmembrane regions (helical) follow at residues 38–57 and 58–76; these read AVGA…TWEA and FRFA…TFSY. The short motif at 77-82 is the Histidine box-1 element; that stretch reads HRNLTH. The Histidine box-2 motif lies at 114–118; sequence HRFHH. Helical transmembrane passes span 174-194 and 198-218; these read IGLH…LPYL and VGVG…ACHI. The short motif at 246–250 is the Histidine box-3 element; the sequence is HNNHH. Residues 262–282 traverse the membrane as a helical segment; it reads WYQVDLTWYLIWFFQVLGLAT.

Belongs to the fatty acid desaturase type 1 family. Fe cation serves as cofactor.

The protein resides in the endoplasmic reticulum membrane. It participates in lipid metabolism; polyunsaturated fatty acid biosynthesis. In Arabidopsis thaliana (Mouse-ear cress), this protein is Delta-9 desaturase-like 3 protein.